The following is a 181-amino-acid chain: Inner kinetochore subunit MCM16 (181 aa).

Positions 112–171 form a coiled coil; sequence KQLIESRAERDELMSKLIELSSKFPKPTIPPDDSDTAGKQVEVEKENETIQELMIALQIH.

This sequence belongs to the CENP-H/MCM16 family. In terms of assembly, component of the heterotrimeric kinetochore subcomplex CTF3, which consists of CTF3, MCM16 and MCM22. The CTF3 subcomplex is part of a larger constitutive centromere-associated network (CCAN) (also known as central kinetochore CTF19 complex in yeast), which is composed of at least AME1, CHL4, CNN1, CTF3, CTF19, IML3, MCM16, MCM21, MCM22, MHF1, MHF2, MIF2, NKP1, NKP2, OKP1 and WIP1. Interacts with CTF19.

It is found in the nucleus. The protein localises to the chromosome. The protein resides in the centromere. It localises to the kinetochore. Functionally, component of the kinetochore, a multiprotein complex that assembles on centromeric DNA and attaches chromosomes to spindle microtubules, mediating chromosome segregation and sister chromatid segregation during meiosis and mitosis. Component of the inner kinetochore constitutive centromere-associated network (CCAN), which serves as a structural platform for outer kinetochore assembly. In Saccharomyces cerevisiae (strain ATCC 204508 / S288c) (Baker's yeast), this protein is Inner kinetochore subunit MCM16 (MCM16).